The primary structure comprises 611 residues: Dihydroxy-acid dehydratase (611 aa).

Mg(2+) is bound at residue D81. Residue C122 participates in [2Fe-2S] cluster binding. Mg(2+)-binding residues include D123 and K124. Residue K124 is modified to N6-carboxylysine. C195 is a [2Fe-2S] cluster binding site. E491 lines the Mg(2+) pocket. S517 acts as the Proton acceptor in catalysis.

Belongs to the IlvD/Edd family. As to quaternary structure, homodimer. Requires [2Fe-2S] cluster as cofactor. Mg(2+) is required as a cofactor.

The catalysed reaction is (2R)-2,3-dihydroxy-3-methylbutanoate = 3-methyl-2-oxobutanoate + H2O. It catalyses the reaction (2R,3R)-2,3-dihydroxy-3-methylpentanoate = (S)-3-methyl-2-oxopentanoate + H2O. It functions in the pathway amino-acid biosynthesis; L-isoleucine biosynthesis; L-isoleucine from 2-oxobutanoate: step 3/4. It participates in amino-acid biosynthesis; L-valine biosynthesis; L-valine from pyruvate: step 3/4. Functionally, functions in the biosynthesis of branched-chain amino acids. Catalyzes the dehydration of (2R,3R)-2,3-dihydroxy-3-methylpentanoate (2,3-dihydroxy-3-methylvalerate) into 2-oxo-3-methylpentanoate (2-oxo-3-methylvalerate) and of (2R)-2,3-dihydroxy-3-methylbutanoate (2,3-dihydroxyisovalerate) into 2-oxo-3-methylbutanoate (2-oxoisovalerate), the penultimate precursor to L-isoleucine and L-valine, respectively. In Actinobacillus pleuropneumoniae serotype 3 (strain JL03), this protein is Dihydroxy-acid dehydratase.